The chain runs to 276 residues: MITTTSQEIELAPTRLPGSQNAARLFVAQTLLQTNRLLTRWARDYITVIGAIVLPILFMVVLNIVLGNLAYVVTHDSGLYSIVPLIALGAAITGSTFVAIDLMRERSFGLLARLWVLPVHRASGLISRILANAIRTLVTTLVMLGTGVVLGFRFRQGLIPSLMWISVPVILGIAIAAMVTTVALYTAQTVVVEGVELVQAIAIFFSTGLVPLNSYPGWIQPFVAHQPVSYAIAAMRGFAMGGPVLSPMIGMLVWTAGICVVCAVPLAIGYRRASTH.

Transmembrane regions (helical) follow at residues 46–66 (ITVIGAIVLPILFMVVLNIVL), 82–102 (IVPLIALGAAITGSTFVAIDL), 129–149 (ILANAIRTLVTTLVMLGTGVV), 159–179 (IPSLMWISVPVILGIAIAAMV), 190–210 (VVVEGVELVQAIAIFFSTGLV), and 248–268 (MIGMLVWTAGICVVCAVPLAI). The ABC transmembrane type-2 domain occupies 46-273 (ITVIGAIVLP…VPLAIGYRRA (228 aa)).

Belongs to the ABC-2 integral membrane protein family. As to quaternary structure, the complex is composed of two ATP-binding proteins (DrrA) and two transmembrane proteins (DrrB and DrrC).

It localises to the cell membrane. Functionally, probably part of the ABC transporter complex DrrABC involved in doxorubicin resistance. Probably responsible for the translocation of the substrate across the membrane. The polypeptide is Probable doxorubicin resistance ABC transporter permease protein DrrC (drrC) (Mycobacterium tuberculosis (strain CDC 1551 / Oshkosh)).